Consider the following 304-residue polypeptide: Uricase (304 aa).

Ala-2 is subject to N-acetylalanine. An N6-acetyllysine; alternate mark is found at Lys-10 and Lys-23. Lys-10 and Lys-23 each carry N6-succinyllysine; alternate. Lys-23 (charge relay system) is an active-site residue. 2 positions are modified to N6-acetyllysine: Lys-27 and Lys-36. A phosphoserine mark is found at Ser-39 and Ser-63. The active-site Charge relay system is Thr-68. Positions 68 and 69 each coordinate urate. N6-acetyllysine occurs at positions 118, 122, and 164. Position 170 (Phe-170) interacts with urate. Residues Lys-175 and Lys-185 each carry the N6-acetyllysine modification. Arg-187 contacts urate. Lys-221 and Lys-228 each carry N6-acetyllysine; alternate. Residues Lys-221 and Lys-228 each carry the N6-succinyllysine; alternate modification. Ser-232 bears the Phosphoserine mark. Urate contacts are provided by Val-235, Gln-236, and Asn-262. Catalysis depends on His-264, which acts as the Charge relay system. Lys-278 carries the post-translational modification N6-acetyllysine. A Phosphotyrosine modification is found at Tyr-289. A Microbody targeting signal motif is present at residues 302–304; that stretch reads SRL.

Belongs to the uricase family.

Its subcellular location is the peroxisome. It carries out the reaction urate + O2 + H2O = 5-hydroxyisourate + H2O2. It participates in purine metabolism; urate degradation; (S)-allantoin from urate: step 1/3. In terms of biological role, catalyzes the oxidation of uric acid to 5-hydroxyisourate, which is further processed to form (S)-allantoin. This chain is Uricase (UOX), found in Macaca fascicularis (Crab-eating macaque).